The chain runs to 645 residues: Threonine--tRNA ligase (645 aa).

Residues 1–63 enclose the TGS domain; it reads MEQINIQFPD…ETDGSIGIVT (63 aa). Residues 242 to 540 form a catalytic region; the sequence is DHRKIGKELE…LTEETKGAFP (299 aa). Cysteine 336, histidine 387, and histidine 517 together coordinate Zn(2+).

This sequence belongs to the class-II aminoacyl-tRNA synthetase family. In terms of assembly, homodimer. It depends on Zn(2+) as a cofactor.

The protein localises to the cytoplasm. The catalysed reaction is tRNA(Thr) + L-threonine + ATP = L-threonyl-tRNA(Thr) + AMP + diphosphate + H(+). Functionally, catalyzes the attachment of threonine to tRNA(Thr) in a two-step reaction: L-threonine is first activated by ATP to form Thr-AMP and then transferred to the acceptor end of tRNA(Thr). Also edits incorrectly charged L-seryl-tRNA(Thr). In Staphylococcus aureus (strain Mu3 / ATCC 700698), this protein is Threonine--tRNA ligase.